A 344-amino-acid chain; its full sequence is Geranylgeranyl pyrophosphate synthase 10, mitochondrial (344 aa).

Residues 1 to 40 (MENREVFVYIVISIFRSLQFLFWRFRPRYNDVTSALTRPL) constitute a mitochondrion transit peptide. Isopentenyl diphosphate contacts are provided by lysine 91, arginine 94, and histidine 123. Mg(2+) contacts are provided by aspartate 130 and aspartate 136. Arginine 141 contacts dimethylallyl diphosphate. Arginine 142 serves as a coordination point for isopentenyl diphosphate. Dimethylallyl diphosphate contacts are provided by lysine 229, threonine 230, glutamine 267, lysine 284, and lysine 294.

Belongs to the FPP/GGPP synthase family. In terms of assembly, monomer. It depends on Mg(2+) as a cofactor.

The protein localises to the mitochondrion. The enzyme catalyses isopentenyl diphosphate + dimethylallyl diphosphate = (2E)-geranyl diphosphate + diphosphate. It carries out the reaction isopentenyl diphosphate + (2E)-geranyl diphosphate = (2E,6E)-farnesyl diphosphate + diphosphate. It catalyses the reaction isopentenyl diphosphate + (2E,6E)-farnesyl diphosphate = (2E,6E,10E)-geranylgeranyl diphosphate + diphosphate. It participates in isoprenoid biosynthesis; farnesyl diphosphate biosynthesis; farnesyl diphosphate from geranyl diphosphate and isopentenyl diphosphate: step 1/1. The protein operates within isoprenoid biosynthesis; geranyl diphosphate biosynthesis; geranyl diphosphate from dimethylallyl diphosphate and isopentenyl diphosphate: step 1/1. It functions in the pathway isoprenoid biosynthesis; geranylgeranyl diphosphate biosynthesis; geranylgeranyl diphosphate from farnesyl diphosphate and isopentenyl diphosphate: step 1/1. Functionally, catalyzes the trans-addition of the three molecules of IPP onto DMAPP to form geranylgeranyl pyrophosphate. The chain is Geranylgeranyl pyrophosphate synthase 10, mitochondrial from Arabidopsis thaliana (Mouse-ear cress).